The sequence spans 26 residues: Acyl carrier protein (26 aa).

Positions 2 to 26 constitute a Carrier domain; sequence SDTATRVQKIVVEHLGVESDKVTQE.

Belongs to the acyl carrier protein (ACP) family. 4'-phosphopantetheine is transferred from CoA to a specific serine of apo-ACP by AcpS. This modification is essential for activity because fatty acids are bound in thioester linkage to the sulfhydryl of the prosthetic group.

It is found in the cytoplasm. It functions in the pathway lipid metabolism; fatty acid biosynthesis. In terms of biological role, carrier of the growing fatty acid chain in fatty acid biosynthesis. The protein is Acyl carrier protein (acpP) of Erythrobacter longus.